Reading from the N-terminus, the 248-residue chain is Probable transcriptional regulatory protein HCH_04926 (248 aa).

The protein belongs to the TACO1 family.

It is found in the cytoplasm. This is Probable transcriptional regulatory protein HCH_04926 from Hahella chejuensis (strain KCTC 2396).